A 391-amino-acid polypeptide reads, in one-letter code: Elongation factor Tu 1 (391 aa).

The tr-type G domain maps to 10–201 (KLHVNIGTIG…EVDRYIPTPE (192 aa)). Residues 19–26 (GHVDHGKT) form a G1 region. 19–26 (GHVDHGKT) contributes to the GTP binding site. Position 26 (Thr26) interacts with Mg(2+). A G2 region spans residues 55 to 59 (GITIS). Positions 76 to 79 (DCPG) are G3. GTP-binding positions include 76–80 (DCPGH) and 131–134 (NKVD). The G4 stretch occupies residues 131–134 (NKVD). A G5 region spans residues 169-171 (SAL).

This sequence belongs to the TRAFAC class translation factor GTPase superfamily. Classic translation factor GTPase family. EF-Tu/EF-1A subfamily. As to quaternary structure, monomer.

The protein localises to the cytoplasm. The enzyme catalyses GTP + H2O = GDP + phosphate + H(+). Functionally, GTP hydrolase that promotes the GTP-dependent binding of aminoacyl-tRNA to the A-site of ribosomes during protein biosynthesis. In Bartonella bacilliformis (strain ATCC 35685 / KC583 / Herrer 020/F12,63), this protein is Elongation factor Tu 1.